The primary structure comprises 192 residues: MYTREELMEIVSERVKKCTACPLHLNRTNVVVGEGNLDTRIVFVGEGPGEEEDKTGRPFVGRAGMLLTELLRESGIRREDVYICNVVKCRPPNNRTPTPEEQAACGHFLLAQIEIINPDVIVALGATALSFFVDGKKVSITKVRGNPIDWLGGKKVIPTFHPSYLLRNRSNELRRIVLEDIEKAKSFIKKEG.

Cysteine 18 and cysteine 21 together coordinate [4Fe-4S] cluster. Uracil is bound by residues 45–47, phenylalanine 59, and asparagine 85; that span reads GEG. Residues cysteine 89 and cysteine 105 each coordinate [4Fe-4S] cluster. Histidine 161 lines the uracil pocket.

It belongs to the uracil-DNA glycosylase (UDG) superfamily. Type 4 (UDGa) family.

The enzyme catalyses Hydrolyzes single-stranded DNA or mismatched double-stranded DNA and polynucleotides, releasing free uracil.. Removes uracil bases that are present in DNA as a result of either deamination of cytosine or misincorporation of dUMP instead of dTMP. Can remove uracil from double-stranded DNA containing either a U/G or U/A base pair as well as from single-stranded DNA. This chain is Type-4 uracil-DNA glycosylase, found in Thermotoga maritima (strain ATCC 43589 / DSM 3109 / JCM 10099 / NBRC 100826 / MSB8).